The primary structure comprises 118 residues: UPF0058 protein MJ1132 (118 aa).

It belongs to the UPF0058 family.

This chain is UPF0058 protein MJ1132, found in Methanocaldococcus jannaschii (strain ATCC 43067 / DSM 2661 / JAL-1 / JCM 10045 / NBRC 100440) (Methanococcus jannaschii).